We begin with the raw amino-acid sequence, 525 residues long: GMP synthase [glutamine-hydrolyzing] (525 aa).

Residues 9 to 207 (RILILDFGSQ…VLGICGCEAL (199 aa)) enclose the Glutamine amidotransferase type-1 domain. The active-site Nucleophile is Cys-86. Residues His-181 and Glu-183 contribute to the active site. The GMPS ATP-PPase domain maps to 208–400 (WTSATIIEDA…LGLPYDMLYR (193 aa)). Residue 235–241 (SGGVDSS) coordinates ATP.

In terms of assembly, homodimer.

The catalysed reaction is XMP + L-glutamine + ATP + H2O = GMP + L-glutamate + AMP + diphosphate + 2 H(+). It functions in the pathway purine metabolism; GMP biosynthesis; GMP from XMP (L-Gln route): step 1/1. Catalyzes the synthesis of GMP from XMP. The chain is GMP synthase [glutamine-hydrolyzing] from Yersinia pseudotuberculosis serotype IB (strain PB1/+).